A 383-amino-acid polypeptide reads, in one-letter code: Cytochrome b (383 aa).

The next 4 helical transmembrane spans lie at 34–54, 78–99, 114–134, and 179–199; these read FGSL…FLMM, WLIR…FLHI, WNVG…GYVL, and FTAL…THLI. Heme b-binding residues include histidine 84 and histidine 98. Histidine 183 and histidine 197 together coordinate heme b. An a ubiquinone-binding site is contributed by histidine 202. 4 consecutive transmembrane segments (helical) span residues 227–247, 289–309, 321–341, and 348–368; these read MKDV…ALYL, LGGV…PFLH, LSQL…WIGG, and YILL…ILMP.

Belongs to the cytochrome b family. As to quaternary structure, the cytochrome bc1 complex contains 3 respiratory subunits (MT-CYB, CYC1 and UQCRFS1), 2 core proteins (UQCRC1 and UQCRC2) and probably 6 low-molecular weight proteins. Heme b is required as a cofactor.

It is found in the mitochondrion inner membrane. Its function is as follows. Component of the ubiquinol-cytochrome c reductase complex (complex III or cytochrome b-c1 complex) that is part of the mitochondrial respiratory chain. The b-c1 complex mediates electron transfer from ubiquinol to cytochrome c. Contributes to the generation of a proton gradient across the mitochondrial membrane that is then used for ATP synthesis. In Caiman crocodilus (Spectacled caiman), this protein is Cytochrome b (MT-CYB).